Reading from the N-terminus, the 461-residue chain is Cyclic AMP-responsive element-binding protein 3-like protein 3 (461 aa).

Over 1 to 322 the chain is Cytoplasmic; sequence MNTDLAAGKM…STSKSAQTGT (322 aa). The disordered stretch occupies residues 51–120; that stretch reads DQQVLPNPDS…AGCHPAQPGK (70 aa). Positions 63 to 85 are enriched in low complexity; the sequence is FLSSILGSGDSLPSSPLWSPEGS. Serine 173 carries the post-translational modification Phosphoserine. Residues 243-306 form the bZIP domain; sequence VLKKIRRKIR…LSLLEQLKKL (64 aa). Residues 245–274 are basic motif; the sequence is KKIRRKIRNKQSAQESRKKKKEYIDGLETR. The segment at 285-306 is leucine-zipper; the sequence is LQRKVLHLEKQNLSLLEQLKKL. Lysine 294 is covalently cross-linked (Glycyl lysine isopeptide (Lys-Gly) (interchain with G-Cter in ubiquitin)). Residues 323-343 traverse the membrane as a helical; Signal-anchor for type II membrane protein segment; that stretch reads CVAVLLLSFALIILPSISPFG. The Lumenal segment spans residues 344 to 461; it reads PNKTESPGDF…AGLEAAGDEL (118 aa). The tract at residues 370-408 is disordered; it reads RVAADAVPGSEAPGPRPEADTTREESPGSPGADWGFQDT. Serine 379 carries O-linked (GalNAc...) serine glycosylation. Positions 386–395 are enriched in basic and acidic residues; that stretch reads PEADTTREES. N-linked (GlcNAc...) asparagine glycans are attached at residues asparagine 410, asparagine 413, asparagine 420, and asparagine 427. Residues 442–461 form a disordered region; sequence APGPSTGSGRAGLEAAGDEL.

This sequence belongs to the bZIP family. ATF subfamily. Binds DNA as a dimer. May form homodimers. Interacts with ATF6. Interacts with SYNV1/HRD1; this interaction leads to CREB3L3 ubiquitination and proteasomal degradation. In terms of processing, controlled by regulated intramembrane proteolysis (RIP). Following ER stress a fragment containing the cytoplasmic transcription factor domain is released by proteolysis. The cleavage seems to be performed sequentially by site-1 and site-2 proteases (PS1 and PS2). Post-translationally, N- and O-glycosylated. N-glycosylation is required for optimal proteolytic activation. O-glycosylated with core 1 or possibly core 8 glycans. Ubiquitinated at Lys-294 by SYNV1/HRD1 via 'Lys-27'-linked ubiquitin. In terms of tissue distribution, exclusively expressed in liver. Underexpressed in hepatocellular carcinoma tissues.

The protein resides in the endoplasmic reticulum membrane. Its subcellular location is the nucleus. Functionally, transcription factor that may act during endoplasmic reticulum stress by activating unfolded protein response target genes. Activated in response to cAMP stimulation. In vitro, binds to the cAMP response element (CRE) and box-B element. Activates transcription through box-B element. Activates transcription through CRE. May function synergistically with ATF6. In acute inflammatory response, may activate expression of acute phase response (APR) genes. May be involved in growth suppression. Regulates FGF21 transcription. Plays a crucial role in the regulation of triglyceride metabolism and is required for the maintenance of normal plasma triglyceride concentrations. The chain is Cyclic AMP-responsive element-binding protein 3-like protein 3 (CREB3L3) from Homo sapiens (Human).